The sequence spans 140 residues: Small ribosomal subunit protein uS12m (140 aa).

It belongs to the universal ribosomal protein uS12 family.

The protein resides in the mitochondrion. The sequence is that of Small ribosomal subunit protein uS12m (mrps12) from Dictyostelium citrinum (Slime mold).